The following is a 418-amino-acid chain: Transmembrane protease serine 11D (418 aa).

Topologically, residues 1–20 (MYRPARVTSTSRFLNPYVVC) are cytoplasmic. The helical; Signal-anchor for type II membrane protein transmembrane segment at 21–41 (FIVVAGVVILAVTIALLVYFL) threads the bilayer. Over 42–418 (AFDQKSYFYR…LDWIRQQTGI (377 aa)) the chain is Extracellular. Residues 46 to 163 (KSYFYRSSFQ…STEITSLTDQ (118 aa)) form the SEA domain. Asparagine 144 is a glycosylation site (N-linked (GlcNAc...) asparagine). Intrachain disulfides connect cysteine 173–cysteine 292, cysteine 212–cysteine 228, cysteine 337–cysteine 353, and cysteine 364–cysteine 393. A Peptidase S1 domain is found at 187–417 (ILGGTEAEEG…YLDWIRQQTG (231 aa)). Active-site charge relay system residues include histidine 227 and aspartate 272. Serine 368 serves as the catalytic Charge relay system.

The protein belongs to the peptidase S1 family. As to quaternary structure, monomer. As to expression, located in the cells of the submucosal serous glands of the bronchi and trachea.

Its subcellular location is the cell membrane. It localises to the secreted. Its activity is regulated as follows. Strongly inhibited by diisopropyl fluorophosphate, leupeptin, antipain, aprotinin, and soybean trypsin inhibitor, but hardly inhibited by secretory leukocyte protease inhibitor at 10 microM. Functionally, may play some biological role in the host defense system on the mucous membrane independently of or in cooperation with other substances in airway mucous or bronchial secretions. Plays a role in the proteolytic processing of ACE2. Proteolytically cleaves and activates the human coronavirus 229E (HCoV-229E) spike glycoprotein which facilitate virus-cell membrane fusions; spike proteins are synthesized and maintained in precursor intermediate folding states and proteolysis permits the refolding and energy release required to create stable virus-cell linkages and membrane coalescence. Preferentially cleaves the C-terminal side of arginine residues at the P1 position of certain peptides, cleaving Boc-Phe-Ser-Arg-4-methylcoumaryl-7-amide most efficiently and having an optimum pH of 8.6 with this substrate. The polypeptide is Transmembrane protease serine 11D (TMPRSS11D) (Homo sapiens (Human)).